The primary structure comprises 983 residues: Polyhomeotic-like protein 3 (983 aa).

7 disordered regions span residues 1-34 (MDTE…MQQP), 103-149 (LSSG…SSTS), 225-283 (VLSS…TAVT), 313-332 (LHSP…QQQQ), 339-410 (LQNS…SQSP), 477-509 (PGQQ…STSP), and 601-620 (DECV…PAAI). Composition is skewed to low complexity over residues 9-29 (TSSV…TSSS) and 103-126 (LSSG…SQTS). Over residues 127–139 (INLSTSPTPAQLI) the composition is skewed to polar residues. The span at 140-149 (SRSQASSSTS) shows a compositional bias: low complexity. The span at 225–257 (VLSSSQNGPPKSTSQTQSLTICHNKTTVTSSKI) shows a compositional bias: polar residues. Basic and acidic residues predominate over residues 258 to 271 (SQRDPSPESNKKGE). Phosphoserine is present on residues Ser-263 and Ser-272. Positions 274 to 283 (SLESRSTAVT) are enriched in polar residues. Residue Ser-315 is modified to Phosphoserine. The span at 365–383 (SNAQSQHCSPIQSHPSPLT) shows a compositional bias: polar residues. The span at 384 to 398 (VSPNQSQSAQQSVVV) shows a compositional bias: low complexity. A compositionally biased stretch (polar residues) spans 477–489 (PGQQIVSPSHQQY). Over residues 490–506 (SSLQSSPIPIASPPQMS) the composition is skewed to low complexity. A phosphothreonine mark is found at Thr-609 and Thr-614. At Ser-616 the chain carries Phosphoserine. Residues Lys-691 and Lys-732 each participate in a glycyl lysine isopeptide (Lys-Gly) (interchain with G-Cter in SUMO2) cross-link. The HD1 motif lies at 691 to 720 (KPPQAIVKPQILTHVIEGFVIQEGLEPFPV). Phosphoserine is present on residues Ser-761 and Ser-762. An FCS-type zinc finger spans residues 776–810 (EEMDSELLKCEFCGKMGYANEFLRSKRFCTMSCAK). Zn(2+)-binding residues include Cys-785, Cys-788, Cys-804, and Cys-808. Residue Lys-810 forms a Glycyl lysine isopeptide (Lys-Gly) (interchain with G-Cter in SUMO2) linkage. Disordered stretches follow at residues 827–847 (RKPD…PDGA) and 864–889 (EEDL…SERE). The SAM domain maps to 919-983 (WTVDDVWAFI…CARINSLKES (65 aa)).

As to quaternary structure, component of a PRC1-like complex.

Its subcellular location is the nucleus. In terms of biological role, component of a Polycomb group (PcG) multiprotein PRC1-like complex, a complex class required to maintain the transcriptionally repressive state of many genes, including Hox genes, throughout development. PcG PRC1 complex acts via chromatin remodeling and modification of histones; it mediates monoubiquitination of histone H2A 'Lys-119', rendering chromatin heritably changed in its expressibility. The chain is Polyhomeotic-like protein 3 (PHC3) from Homo sapiens (Human).